The primary structure comprises 367 residues: Ribosomal RNA large subunit methyltransferase M (367 aa).

S-adenosyl-L-methionine contacts are provided by residues Ser-188, 221–224 (CPGG), Asp-240, Asp-260, and Asp-277. Lys-306 (proton acceptor) is an active-site residue.

Belongs to the class I-like SAM-binding methyltransferase superfamily. RNA methyltransferase RlmE family. RlmM subfamily. Monomer.

It localises to the cytoplasm. The enzyme catalyses cytidine(2498) in 23S rRNA + S-adenosyl-L-methionine = 2'-O-methylcytidine(2498) in 23S rRNA + S-adenosyl-L-homocysteine + H(+). In terms of biological role, catalyzes the 2'-O-methylation at nucleotide C2498 in 23S rRNA. The sequence is that of Ribosomal RNA large subunit methyltransferase M from Serratia proteamaculans (strain 568).